The chain runs to 308 residues: Glycine--tRNA ligase alpha subunit (308 aa).

This sequence belongs to the class-II aminoacyl-tRNA synthetase family. In terms of assembly, tetramer of two alpha and two beta subunits.

Its subcellular location is the cytoplasm. It catalyses the reaction tRNA(Gly) + glycine + ATP = glycyl-tRNA(Gly) + AMP + diphosphate. The sequence is that of Glycine--tRNA ligase alpha subunit from Brucella abortus (strain 2308).